The sequence spans 345 residues: UPF0324 membrane protein RB0971 (345 aa).

Transmembrane regions (helical) follow at residues serine 13–alanine 32, tyrosine 42–alanine 61, leucine 93–phenylalanine 115, alanine 130–leucine 152, asparagine 161–valine 183, alanine 193–valine 215, leucine 228–serine 247, valine 262–leucine 284, alanine 291–leucine 310, and alanine 320–leucine 342.

This sequence belongs to the UPF0324 family.

The protein localises to the cell membrane. In Rhizobium meliloti (strain 1021) (Ensifer meliloti), this protein is UPF0324 membrane protein RB0971.